The primary structure comprises 163 residues: MHTRAIYPGTFDPITNGHADLIERAAKLFKHVVIGIAANPSKQPRFTLEERVELVNRVTAHLDNVEVVGFSGLLVDFAKEQKASVLVRGLRAVSDFEYEFQLANMNRRLSPDLESVFLTPAEENSFISSTLVKEVALHGGDVNQFVHSEVATALAAKLKLAKP.

Residue threonine 10 participates in substrate binding. ATP-binding positions include 10-11 (TF) and histidine 18. Residues lysine 42, leucine 74, and arginine 88 each contribute to the substrate site. Residues 89–91 (GLR), glutamate 99, and 124–130 (NSFISST) contribute to the ATP site.

It belongs to the bacterial CoaD family. Homohexamer. Mg(2+) serves as cofactor.

Its subcellular location is the cytoplasm. It catalyses the reaction (R)-4'-phosphopantetheine + ATP + H(+) = 3'-dephospho-CoA + diphosphate. It functions in the pathway cofactor biosynthesis; coenzyme A biosynthesis; CoA from (R)-pantothenate: step 4/5. Reversibly transfers an adenylyl group from ATP to 4'-phosphopantetheine, yielding dephospho-CoA (dPCoA) and pyrophosphate. This chain is Phosphopantetheine adenylyltransferase, found in Shewanella baltica (strain OS155 / ATCC BAA-1091).